The chain runs to 193 residues: MALEALNSPRLVEDPLRFNGVEQWTKCKKRSKRSRSDLHHNHRLTEEEYLAFCLMLLARDGGDLDSVTVAEKPSYKCGVCYKTFSSYQALGGHKASHRSLYGGGENDKSTPSTAVKSHVCSVCGKSFATGQALGGHKRCHYDGGVSNSEGVGSTSHVSSSSHRGFDLNIIPVQGFSPDDEVMSPMATKKPRLK.

C2H2-type zinc fingers lie at residues 75-97 (YKCGVCYKTFSSYQALGGHKASH) and 118-140 (HVCSVCGKSFATGQALGGHKRCH).

Expressed in roots.

The protein resides in the nucleus. Its function is as follows. Transcriptional repressor probably involved in abiotic stress responses. Binds DNA in a sequence-specific manner and can repress the transactivation activity of other transcription factors. This Arabidopsis thaliana (Mouse-ear cress) protein is Zinc finger protein AZF3 (AZF3).